A 210-amino-acid polypeptide reads, in one-letter code: Phosphate propanoyltransferase (210 aa).

A CoA-binding site is contributed by 26-28; the sequence is VSN. His30 and His32 together coordinate Zn(2+). Lys71 and Arg78 together coordinate CoA. Residue Arg84 participates in phosphate binding. Positions 90, 138, 140, and 186 each coordinate Zn(2+). Asn193 lines the CoA pocket.

It belongs to the PduL family. As to quaternary structure, monomer, when purified in the absence of the encapsulation peptide (EP, residues 1-27). The EP may influence oligomerization. The cofactor is Zn(2+).

The protein localises to the bacterial microcompartment. The enzyme catalyses propanoyl-CoA + phosphate = propanoyl phosphate + CoA. It functions in the pathway polyol metabolism; 1,2-propanediol degradation. Involved in 1,2-propanediol (1,2-PD) utilization in the bacterial microcompartment (BMC) dedicated to 1,2-PD degradation by catalyzing the conversion of propanoyl-CoA to propanoyl-phosphate. Also able to catalyze the reverse reaction. Also has phosphate acetyltransferase activity to a lesser extent. Required for optimal growth on 1,2-PD when the BMC is intact. CoA is regenerated within the BMC (for use by PduP) via this enzyme, although there must also be cofactor transport across the BMC. Directly targeted to the BMC. Its function is as follows. The 1,2-PD-specific bacterial microcompartment (BMC) concentrates low levels of 1,2-PD catabolic enzymes, concentrates volatile reaction intermediates thus enhancing pathway flux and keeps the level of toxic, mutagenic propionaldehyde low. In Salmonella typhimurium (strain LT2 / SGSC1412 / ATCC 700720), this protein is Phosphate propanoyltransferase.